A 508-amino-acid polypeptide reads, in one-letter code: Lysine--tRNA ligase (508 aa).

2 residues coordinate Mg(2+): glutamate 418 and glutamate 425.

This sequence belongs to the class-II aminoacyl-tRNA synthetase family. Homodimer. The cofactor is Mg(2+).

Its subcellular location is the cytoplasm. The enzyme catalyses tRNA(Lys) + L-lysine + ATP = L-lysyl-tRNA(Lys) + AMP + diphosphate. This is Lysine--tRNA ligase from Burkholderia pseudomallei (strain 668).